Consider the following 233-residue polypeptide: 2-C-methyl-D-erythritol 4-phosphate cytidylyltransferase (233 aa).

It belongs to the IspD/TarI cytidylyltransferase family. IspD subfamily.

It catalyses the reaction 2-C-methyl-D-erythritol 4-phosphate + CTP + H(+) = 4-CDP-2-C-methyl-D-erythritol + diphosphate. It functions in the pathway isoprenoid biosynthesis; isopentenyl diphosphate biosynthesis via DXP pathway; isopentenyl diphosphate from 1-deoxy-D-xylulose 5-phosphate: step 2/6. Catalyzes the formation of 4-diphosphocytidyl-2-C-methyl-D-erythritol from CTP and 2-C-methyl-D-erythritol 4-phosphate (MEP). This Nitrosomonas eutropha (strain DSM 101675 / C91 / Nm57) protein is 2-C-methyl-D-erythritol 4-phosphate cytidylyltransferase.